A 488-amino-acid polypeptide reads, in one-letter code: Receptor-like tyrosine-protein kinase kin-15 (488 aa).

The signal sequence occupies residues 1–26 (MCLKMRYERIKYILLFSLMHLVYSNS). A glycan (N-linked (GlcNAc...) asparagine) is linked at Asn25. Topologically, residues 27-50 (TFESFTENPHISSQISNVLYMDQM) are extracellular. The helical transmembrane segment at 51-70 (FIIYILICILLILISVIVYL) threads the bilayer. Over 71-488 (SKRYSQQMMQ…SKLEDWIRRD (418 aa)) the chain is Cytoplasmic. The Protein kinase domain occupies 144-458 (EISEDKLGSG…VEFFEEHLSV (315 aa)). ATP is bound by residues 150-158 (LGSGFFGEV) and Lys183. Asp319 (proton acceptor) is an active-site residue.

Belongs to the protein kinase superfamily. Tyr protein kinase family. In terms of tissue distribution, hypodermal cells.

It localises to the cell membrane. It catalyses the reaction L-tyrosyl-[protein] + ATP = O-phospho-L-tyrosyl-[protein] + ADP + H(+). Its function is as follows. May be specifically involved in cell-cell interactions regulating cell fusions that generate the hypodermis during postembryonic development. It has a role in the development of the HYP7 hypodermal syncytium. The chain is Receptor-like tyrosine-protein kinase kin-15 (kin-15) from Caenorhabditis elegans.